The primary structure comprises 204 residues: Minor allergen Alt a 7 (204 aa).

The region spanning 5–195 (IAIVYYSMYG…NIAQAQGKAF (191 aa)) is the Flavodoxin-like domain.

The protein belongs to the WrbA family.

It is found in the cytoplasm. This chain is Minor allergen Alt a 7 (ALTA7), found in Alternaria alternata (Alternaria rot fungus).